The sequence spans 943 residues: Translation initiation factor IF-2 (943 aa).

The disordered stretch occupies residues 46–359 (IKGMLSKQSA…MPQRKERPLP (314 aa)). Over residues 57-76 (KAPSSQAAKTPAKAAKTSSA) the composition is skewed to low complexity. Composition is skewed to basic and acidic residues over residues 92 to 103 (SNDHADVAEHSQ) and 110 to 124 (AKQE…KTSD). The span at 130-141 (SKSTILRPRSTQ) shows a compositional bias: polar residues. A compositionally biased stretch (low complexity) spans 142–190 (TAHTNTNHNRGGNTASANNTANGRNSNRSNNNNNNRSANNANRSGNNNR). Basic and acidic residues-rich tracts occupy residues 191 to 205 (SNER…RFDN), 239 to 250 (ASERQQPKRQEA), and 259 to 271 (KRSE…RPRT). 2 stretches are compositionally biased toward low complexity: residues 289–299 (PAAAAPKPASA) and 315–330 (NFGR…GFNR). The segment covering 331–342 (NNRRNKKNKRRQ) has biased composition (basic residues). The segment covering 346–358 (PKKEMPQRKERPL) has biased composition (basic and acidic residues). The region spanning 444 to 613 (PRPPVVTIMG…LLEADVLELK (170 aa)) is the tr-type G domain. The tract at residues 453–460 (GHVDHGKT) is G1. 453–460 (GHVDHGKT) lines the GTP pocket. Positions 478–482 (GITQH) are G2. Positions 499 to 502 (DTPG) are G3. GTP is bound by residues 499–503 (DTPGH) and 553–556 (NKID). A G4 region spans residues 553-556 (NKID). Residues 589 to 591 (SAK) are G5.

This sequence belongs to the TRAFAC class translation factor GTPase superfamily. Classic translation factor GTPase family. IF-2 subfamily.

It localises to the cytoplasm. Its function is as follows. One of the essential components for the initiation of protein synthesis. Protects formylmethionyl-tRNA from spontaneous hydrolysis and promotes its binding to the 30S ribosomal subunits. Also involved in the hydrolysis of GTP during the formation of the 70S ribosomal complex. This is Translation initiation factor IF-2 from Lacticaseibacillus casei (strain BL23) (Lactobacillus casei).